The primary structure comprises 1604 residues: Ubiquitin carboxyl-terminal hydrolase 32 (1604 aa).

3 consecutive EF-hand domains span residues 91-126, 228-263, and 264-299; these read KDEEKAKYIFSLFSSESGNYVIREEMERMLHVVDGK, IRPSLSEGLFNAFDENRDNHIDFKEISCGLSACCRG, and PLAERQKFCFKVFDVDRDGVLSRVELRDMVVALLEV. 9 residues coordinate Ca(2+): D241, N243, D245, H247, E252, D277, D279, D281, and E288. Residues 369-585 form the DUSP domain; that stretch reads ATPEEEGQII…ANLALPRPVI (217 aa). A USP domain is found at 734 to 1567; it reads TGLSNLGNTC…SAYILFYEQQ (834 aa). The Nucleophile role is filled by C743. Y1173 is subject to Phosphotyrosine. Disordered stretches follow at residues 1343–1362 and 1367–1431; these read KKVDAQSSAGEEDVLLSKSP and ANII…DASK. Phosphoserine is present on residues S1350, S1372, S1376, and S1454. Residues 1367-1399 are compositionally biased toward low complexity; sequence ANIISSPKGSPSSSRKSGTSCPSSKNSSPNSSP. H1526 serves as the catalytic Proton acceptor. S1588 carries the post-translational modification Phosphoserine. C1601 is modified (cysteine methyl ester). The S-farnesyl cysteine moiety is linked to residue C1601. A propeptide spans 1602–1604 (removed in mature form); sequence VLQ.

It belongs to the peptidase C19 family.

The protein resides in the golgi apparatus membrane. It carries out the reaction Thiol-dependent hydrolysis of ester, thioester, amide, peptide and isopeptide bonds formed by the C-terminal Gly of ubiquitin (a 76-residue protein attached to proteins as an intracellular targeting signal).. Functionally, deubiquitinase that can remove conjugated ubiquitin from target proteins, such as RAB7A and LAMTOR1. Acts as a positive regulator of the mTORC1 signaling by mediating deubiquitination of LAMTOR1, thereby promoting the association between LAMTOR1 and the lysosomal V-ATPase complex and subsequent activation of the mTORC1 complex. This chain is Ubiquitin carboxyl-terminal hydrolase 32 (USP32), found in Homo sapiens (Human).